Consider the following 938-residue polypeptide: Protocadherin gamma-C4 (938 aa).

A signal peptide spans 1-29 (MLRKVRSWTEIWRWATLLFLFYHLGYVCG). 6 Cadherin domains span residues 30–133 (QIRY…APRF), 134–242 (PRQQ…APAF), 243–350 (QQSS…APYI), 351–455 (TVTS…PPSF), 456–565 (FQRS…APAV), and 572–676 (PGSL…VPDL). The Extracellular segment spans residues 30–692 (QIRYPVPEES…REGESRLTLY (663 aa)). N-linked (GlcNAc...) asparagine glycans are attached at residues asparagine 265, asparagine 276, and asparagine 444. Residues 693 to 713 (LAVSLVAICFVSFGSFVALLS) traverse the membrane as a helical segment. Residues 714-938 (KCLRGAACGV…KKKSGKKEKK (225 aa)) lie on the Cytoplasmic side of the membrane. Disordered stretches follow at residues 791–847 (PSAP…WPNN) and 908–938 (ATLT…KEKK). Over residues 822 to 847 (WRFSQAQRPGTSGSQNGDDTGTWPNN) the composition is skewed to polar residues. Residues 928 to 938 (NKKKSGKKEKK) show a composition bias toward basic residues.

Its subcellular location is the cell membrane. Potential calcium-dependent cell-adhesion protein. May be involved in the establishment and maintenance of specific neuronal connections in the brain. The sequence is that of Protocadherin gamma-C4 (PCDHGC4) from Homo sapiens (Human).